A 245-amino-acid polypeptide reads, in one-letter code: uncharacterized protein (245 aa).

The first 27 residues, methionine 1 to alanine 27, serve as a signal peptide directing secretion.

This is an uncharacterized protein from Bacillus subtilis (strain 168).